We begin with the raw amino-acid sequence, 172 residues long: Ribosome maturation factor RimM (172 aa).

Residues 98–171 (PGEYYYHQIV…KVIVELMEGL (74 aa)) form the PRC barrel domain.

Belongs to the RimM family. In terms of assembly, binds ribosomal protein uS19.

The protein localises to the cytoplasm. In terms of biological role, an accessory protein needed during the final step in the assembly of 30S ribosomal subunit, possibly for assembly of the head region. Essential for efficient processing of 16S rRNA. May be needed both before and after RbfA during the maturation of 16S rRNA. It has affinity for free ribosomal 30S subunits but not for 70S ribosomes. This Levilactobacillus brevis (strain ATCC 367 / BCRC 12310 / CIP 105137 / JCM 1170 / LMG 11437 / NCIMB 947 / NCTC 947) (Lactobacillus brevis) protein is Ribosome maturation factor RimM.